A 123-amino-acid polypeptide reads, in one-letter code: Small ribosomal subunit protein uS13 (123 aa).

Positions 96–123 (LPVRGQRTKTNARTRKGPKKTVGARRKK) are disordered.

This sequence belongs to the universal ribosomal protein uS13 family. In terms of assembly, part of the 30S ribosomal subunit. Forms a loose heterodimer with protein S19. Forms two bridges to the 50S subunit in the 70S ribosome.

In terms of biological role, located at the top of the head of the 30S subunit, it contacts several helices of the 16S rRNA. In the 70S ribosome it contacts the 23S rRNA (bridge B1a) and protein L5 of the 50S subunit (bridge B1b), connecting the 2 subunits; these bridges are implicated in subunit movement. Contacts the tRNAs in the A and P-sites. The sequence is that of Small ribosomal subunit protein uS13 from Desulforamulus reducens (strain ATCC BAA-1160 / DSM 100696 / MI-1) (Desulfotomaculum reducens).